The sequence spans 993 residues: Chromosome transmission fidelity protein 18 homolog (993 aa).

A disordered region spans residues proline 26–serine 72. Positions arginine 60 to serine 72 are enriched in polar residues. Position 427–434 (glycine 427–threonine 434) interacts with ATP. The interval alanine 892–alanine 913 is disordered. Residues proline 894–alanine 913 are compositionally biased toward low complexity.

Belongs to the activator 1 small subunits family. CTF18 subfamily. In terms of assembly, component of the CTF18-RFC complex.

The protein localises to the nucleus. In terms of biological role, chromosome cohesion factor involved in sister chromatid cohesion and fidelity of chromosome transmission. Component of one of the cell nuclear antigen loader complexes, CTF18-replication factor C (CTF18-RFC). The CTF18-RFC complex catalyzes the ATP-dependent loading of PCNA onto primed and gapped DNA and has weak ATPase activity. The CTF18-RFC complex catalyzes the ATP-dependent loading of PCNA onto primed and gapped DNA. This chain is Chromosome transmission fidelity protein 18 homolog, found in Drosophila melanogaster (Fruit fly).